The following is a 448-amino-acid chain: Tapasin (448 aa).

A signal peptide spans 1-20; it reads MKSLSLLLAVALGLATAVSA. At 21–414 the chain is on the lumenal side; it reads GPAVIECWFV…LSGPSLEDSV (394 aa). Cysteines 27 and 91 form a disulfide. N-linked (GlcNAc...) asparagine glycosylation occurs at N253. Residues 292–399 form the Ig-like C1-type domain; it reads PKVSLMPATL…PASGRSAEVT (108 aa). The cysteines at positions 315 and 382 are disulfide-linked. The chain crosses the membrane as a helical span at residues 415–435; the sequence is GLFLSAFLLLGLFKALGWAAV. Over 436–448 the chain is Cytoplasmic; it reads YLSTCKDSKKKAE.

In terms of assembly, heterodimer with PDIA3; disulfide-linked. Obligatory mediator for the interaction between newly assembled MHC class I molecules, calreticulin, PDIA3 and TAP. Up to 4 MHC class I/tapasin complexes bind to 1 TAP. Interacts with HLA-G-B2M complex; this interaction is required for loading of high affinity peptides. On its own or as part of MHC class I peptide loading complex, interacts with ligand-free MR1 or MR1-B2M complex, providing for stable MR1 pools ready for metabolite antigen processing. Neutrophils, mostly in fully differentiated cells.

The protein localises to the endoplasmic reticulum membrane. Functionally, involved in the association of MHC class I with transporter associated with antigen processing (TAP) and in the assembly of MHC class I with peptide (peptide loading). This chain is Tapasin, found in Homo sapiens (Human).